The primary structure comprises 400 residues: U-box domain-containing protein 37 (400 aa).

Residues 229-298 (KEWESAYLEE…RKAKEERDLL (70 aa)) adopt a coiled-coil conformation. The 75-residue stretch at 324-398 (EAPQYFICPI…QEWLHASSSF (75 aa)) folds into the U-box domain.

The enzyme catalyses S-ubiquitinyl-[E2 ubiquitin-conjugating enzyme]-L-cysteine + [acceptor protein]-L-lysine = [E2 ubiquitin-conjugating enzyme]-L-cysteine + N(6)-ubiquitinyl-[acceptor protein]-L-lysine.. The protein operates within protein modification; protein ubiquitination. Functionally, functions as an E3 ubiquitin ligase. This is U-box domain-containing protein 37 (PUB37) from Arabidopsis thaliana (Mouse-ear cress).